Reading from the N-terminus, the 258-residue chain is Aquaporin PIP1-2 (258 aa).

The interval 1 to 37 (MEGKEEDVRLGANKFTERQPIGTAAQSQDKDYKEPPP) is disordered. Residues 1-55 (MEGKEEDVRLGANKFTERQPIGTAAQSQDKDYKEPPPAPLFEPGELSSWSFYRAG) lie on the Cytoplasmic side of the membrane. A helical transmembrane segment spans residues 56–76 (IAEFVATFLFLYITILTVMGV). The Extracellular segment spans residues 77 to 89 (VKSSTKCSTVGIQ). Residues 90–110 (GIAWAFGGMIFALVYCTAGIS) form a helical membrane-spanning segment. The Cytoplasmic portion of the chain corresponds to 111-133 (GGHINPAVTFGLFLARKLSLTRA). Residues 115–117 (NPA) carry the NPA 1 motif. A helical transmembrane segment spans residues 134 to 154 (LFYMVMQCLGAICGAGVVKGF). The Extracellular segment spans residues 155 to 175 (QKGLYENNGGGANVVAPGYTK). Residues 176 to 196 (GDGLGAEIVGTFILVYTVFSA) form a helical membrane-spanning segment. Topologically, residues 197-209 (TDAKRSARDSHVP) are cytoplasmic. Residues 210–230 (ILAPLPIGFAVFLVHLATIPI) form a helical membrane-spanning segment. The Extracellular portion of the chain corresponds to 231–258 (TGTGINPARSLGAAIIYNKGHAWDDHWI). Positions 236-238 (NPA) match the NPA 2 motif.

It belongs to the MIP/aquaporin (TC 1.A.8) family. PIP (TC 1.A.8.11) subfamily. In terms of tissue distribution, barely detectable in roots, leaves and fruits.

It localises to the cell membrane. Its function is as follows. Water channel required to facilitate the transport of water across cell membrane; mercury-insensitive. Contributes to the tolerance to multiple abiotic stresses including salt (NaCl), cold and water deprivation, by modulating cytosolic K(+)/Na(+) ratio, maintaining osmotic balance, and reducing membrane injury (e.g. oxidative injury). This chain is Aquaporin PIP1-2, found in Musa acuminata (Banana).